A 730-amino-acid polypeptide reads, in one-letter code: Wall-associated receptor kinase-like 1 (730 aa).

A signal peptide spans 1-25 (MKTKTSIFQFIVASVLTLLINDSSA). The Extracellular portion of the chain corresponds to 26–358 (ATPPPPISNS…KPTKPPVLQG (333 aa)). N34, N40, N70, N77, N92, N119, N132, N211, N233, N269, and N281 each carry an N-linked (GlcNAc...) asparagine glycan. Residues 282–341 (CSCEYDYFSGMSYRNCYCDYGYTGNPYLRGGCVDTDSCEGNHNCGEDAHCVNMPGPMSMC) are atypical EGF-like. Disulfide bonds link C284/C297, C319/C331, and C325/C341. Residues 359-379 (ILIGLSGLVFFVGLFWLFKLI) form a helical membrane-spanning segment. The Cytoplasmic segment spans residues 380–730 (KKRRNINRSK…DQPMAINNKR (351 aa)). The region spanning 429–702 (FSIDRVLGQG…KEVSNELERI (274 aa)) is the Protein kinase domain. ATP is bound by residues 435 to 443 (LGQGGQGTV) and K457. Y502 bears the Phosphotyrosine mark. D554 functions as the Proton acceptor in the catalytic mechanism. 2 positions are modified to phosphothreonine: T588 and T593. Y601 bears the Phosphotyrosine mark. A disordered region spans residues 685–730 (KGKNRPNMKEVSNELERIRSSPEDLDVRTENEDEEEDQPMAINNKR). Basic and acidic residues predominate over residues 691 to 714 (NMKEVSNELERIRSSPEDLDVRTE).

It belongs to the protein kinase superfamily. Ser/Thr protein kinase family. As to expression, preferentially expressed in roots and flowers.

The protein resides in the membrane. It carries out the reaction L-seryl-[protein] + ATP = O-phospho-L-seryl-[protein] + ADP + H(+). The catalysed reaction is L-threonyl-[protein] + ATP = O-phospho-L-threonyl-[protein] + ADP + H(+). Serine/threonine-protein kinase that may function as a signaling receptor of extracellular matrix component. This chain is Wall-associated receptor kinase-like 1 (WAKL1), found in Arabidopsis thaliana (Mouse-ear cress).